Here is a 794-residue protein sequence, read N- to C-terminus: Protein SEY1 (794 aa).

The Cytoplasmic segment spans residues Met-1–Ala-687. The GB1/RHD3-type G domain maps to Gly-43–Tyr-272. Residue Gly-53–Ser-60 participates in GTP binding. The stretch at Val-331 to Cys-352 forms a coiled coil. Residues Ile-688–Leu-708 form a helical membrane-spanning segment. Topologically, residues Arg-709–Pro-711 are lumenal. The chain crosses the membrane as a helical span at residues Leu-712–Leu-732. Topologically, residues Trp-733–Glu-794 are cytoplasmic. Residues Asn-770–Glu-794 form a disordered region. The segment covering Glu-775–Glu-794 has biased composition (basic and acidic residues).

This sequence belongs to the TRAFAC class dynamin-like GTPase superfamily. GB1/RHD3 GTPase family. RHD3 subfamily.

It localises to the endoplasmic reticulum membrane. In terms of biological role, cooperates with the reticulon proteins and tubule-shaping DP1 family proteins to generate and maintain the structure of the tubular endoplasmic reticulum network. Has GTPase activity, which is required for its function in ER organization. This is Protein SEY1 from Zygosaccharomyces rouxii (strain ATCC 2623 / CBS 732 / NBRC 1130 / NCYC 568 / NRRL Y-229).